We begin with the raw amino-acid sequence, 520 residues long: GMP synthase [glutamine-hydrolyzing] (520 aa).

Residues 12–205 form the Glutamine amidotransferase type-1 domain; that stretch reads KIIVLDYGSQ…AISICGARGD (194 aa). Cys-89 serves as the catalytic Nucleophile. Active-site residues include His-179 and Glu-181. Residues 206-395 enclose the GMPS ATP-PPase domain; that stretch reads WSMDNFIDME…LGMPEEIVWR (190 aa). Position 233–239 (233–239) interacts with ATP; it reads SGGVDSS.

Homodimer.

The enzyme catalyses XMP + L-glutamine + ATP + H2O = GMP + L-glutamate + AMP + diphosphate + 2 H(+). Its pathway is purine metabolism; GMP biosynthesis; GMP from XMP (L-Gln route): step 1/1. In terms of biological role, catalyzes the synthesis of GMP from XMP. The polypeptide is GMP synthase [glutamine-hydrolyzing] (Streptococcus pyogenes serotype M3 (strain SSI-1)).